The sequence spans 824 residues: Neuronal PAS domain-containing protein 2 (824 aa).

The span at 1–10 (MDEDEKDRAK) shows a compositional bias: basic and acidic residues. Residues 1–21 (MDEDEKDRAKRASRNKSEKKR) are disordered. The tract at residues 1–61 (MDEDEKDRAK…VIGFLQKHNE (61 aa)) is sufficient for heterodimer formation with BMAL1, E-box binding and for the effect of NADPH. The region spanning 9–59 (AKRASRNKSEKKRRDQFNVLIKELSSMLPGNTRKMDKTTVLEKVIGFLQKH) is the bHLH domain. Residues 82-152 (NEEFTQLMLE…KILSSHMLVT (71 aa)) enclose the PAS 1 domain. Residues His-119 and His-171 each contribute to the heme b site. The region spanning 237 to 307 (FLKEMCIVDE…RCHQHLMQFG (71 aa)) is the PAS 2 domain. The PAC domain occupies 311 to 354 (SCCYRFLTKGQQWIWLQTHYYITYHQWNSKPEFIVCTHSVVSYA). 4 disordered regions span residues 367–437 (EDPP…MAEA), 556–667 (SSTQ…PDFS), 681–704 (QPMMPGSCDARQPSEVSRTGRQVK), and 739–824 (PSFP…QPPR). Residues 378–390 (ALKDKGSSLEPRQ) show a composition bias toward basic and acidic residues. The span at 421–431 (TAMSEPTSTPT) shows a compositional bias: polar residues. Over residues 559–576 (QRPEAQQQLQQRSAAVTQ) the composition is skewed to low complexity. The span at 587–610 (GQISSAQVTSQHLLRESSVISTQG) shows a compositional bias: polar residues. Low complexity predominate over residues 614-636 (MRSSQLMQSSGRSGSSLVSPFSS). Composition is skewed to polar residues over residues 645–664 (LNLTTPASTSQDASQCQPSP) and 694–704 (SEVSRTGRQVK). The span at 739–760 (PSFPASQPSPLQPAQARQQPPQ) shows a compositional bias: low complexity. Residues 766-789 (QAPTSLHSEQQDSLLLSTYSQQPG) show a composition bias toward polar residues. The segment covering 794-805 (PQPPPAQPQPLR) has biased composition (pro residues). Residues 809–824 (RVSSLSESSGLQQPPR) show a composition bias toward low complexity.

Component of the circadian clock oscillator which includes the CRY proteins, CLOCK or NPAS2, BMAL1 or BMAL2, CSNK1D and/or CSNK1E, TIMELESS and the PER proteins. Efficient DNA binding requires dimerization with another bHLH protein. Forms a heterodimer with BMAL1 and this heterodimerization is required for E-box-dependent transactivation. Interacts with NCOA3, KAT2B, CREBBP and EP300. Heme is required as a cofactor.

It localises to the nucleus. Carbon monoxide (CO) and the redox state of the cell can modulate the transcriptional activity of the NPAS2-BMAL1 heterodimer. NADH and NADPH enhance the DNA-binding activity of the heterodimer whereas CO binds the heme group in NPAS2 and inhibits the DNA-binding activity of the heterodimer. Functionally, transcriptional activator which forms a core component of the circadian clock. The circadian clock, an internal time-keeping system, regulates various physiological processes through the generation of approximately 24 hour circadian rhythms in gene expression, which are translated into rhythms in metabolism and behavior. It is derived from the Latin roots 'circa' (about) and 'diem' (day) and acts as an important regulator of a wide array of physiological functions including metabolism, sleep, body temperature, blood pressure, endocrine, immune, cardiovascular, and renal function. Consists of two major components: the central clock, residing in the suprachiasmatic nucleus (SCN) of the brain, and the peripheral clocks that are present in nearly every tissue and organ system. Both the central and peripheral clocks can be reset by environmental cues, also known as Zeitgebers (German for 'timegivers'). The predominant Zeitgeber for the central clock is light, which is sensed by retina and signals directly to the SCN. The central clock entrains the peripheral clocks through neuronal and hormonal signals, body temperature and feeding-related cues, aligning all clocks with the external light/dark cycle. Circadian rhythms allow an organism to achieve temporal homeostasis with its environment at the molecular level by regulating gene expression to create a peak of protein expression once every 24 hours to control when a particular physiological process is most active with respect to the solar day. Transcription and translation of core clock components (CLOCK, NPAS2, BMAL1, BMAL2, PER1, PER2, PER3, CRY1 and CRY2) plays a critical role in rhythm generation, whereas delays imposed by post-translational modifications (PTMs) are important for determining the period (tau) of the rhythms (tau refers to the period of a rhythm and is the length, in time, of one complete cycle). A diurnal rhythm is synchronized with the day/night cycle, while the ultradian and infradian rhythms have a period shorter and longer than 24 hours, respectively. Disruptions in the circadian rhythms contribute to the pathology of cardiovascular diseases, cancer, metabolic syndromes and aging. A transcription/translation feedback loop (TTFL) forms the core of the molecular circadian clock mechanism. Transcription factors, CLOCK or NPAS2 and BMAL1 or BMAL2, form the positive limb of the feedback loop, act in the form of a heterodimer and activate the transcription of core clock genes and clock-controlled genes (involved in key metabolic processes), harboring E-box elements (5'-CACGTG-3') within their promoters. The core clock genes: PER1/2/3 and CRY1/2 which are transcriptional repressors form the negative limb of the feedback loop and interact with the CLOCK|NPAS2-BMAL1|BMAL2 heterodimer inhibiting its activity and thereby negatively regulating their own expression. This heterodimer also activates nuclear receptors NR1D1/2 and RORA/B/G, which form a second feedback loop and which activate and repress BMAL1 transcription, respectively. The NPAS2-BMAL1 heterodimer positively regulates the expression of MAOA, F7 and LDHA and modulates the circadian rhythm of daytime contrast sensitivity by regulating the rhythmic expression of adenylate cyclase type 1 (ADCY1) in the retina. NPAS2 plays an important role in sleep homeostasis and in maintaining circadian behaviors in normal light/dark and feeding conditions and in the effective synchronization of feeding behavior with scheduled food availability. Regulates the gene transcription of key metabolic pathways in the liver and is involved in DNA damage response by regulating several cell cycle and DNA repair genes. Controls the circadian rhythm of NR0B2 expression by binding rhythmically to its promoter. Mediates the diurnal variation in the expression of GABARA1 receptor in the brain and contributes to the regulation of anxiety-like behaviors and GABAergic neurotransmission in the ventral striatum. The polypeptide is Neuronal PAS domain-containing protein 2 (NPAS2) (Homo sapiens (Human)).